Reading from the N-terminus, the 871-residue chain is DNA mismatch repair protein MutS (871 aa).

605–612 (GPNMGGKS) is a binding site for ATP. The interval 791–840 (PQRPTSASVEQPVDSAKTETAATAEEPQQLSLFPTDEETKPKQPTKKERS) is disordered. The span at 827–840 (EETKPKQPTKKERS) shows a compositional bias: basic and acidic residues.

Belongs to the DNA mismatch repair MutS family.

Its function is as follows. This protein is involved in the repair of mismatches in DNA. It is possible that it carries out the mismatch recognition step. This protein has a weak ATPase activity. This Shouchella clausii (strain KSM-K16) (Alkalihalobacillus clausii) protein is DNA mismatch repair protein MutS.